The following is a 314-amino-acid chain: Lysophospholipase D GDPD1 (314 aa).

The Extracellular portion of the chain corresponds to 1–3 (MSS). Residues 4 to 24 (TAAFCLLSTLGGYLVTSFLLL) traverse the membrane as a helical segment. Over 25–195 (KYPALLHQRK…VDKCYKENSD (171 aa)) the chain is Cytoplasmic. The GP-PDE domain maps to 40-309 (SRHISHRGGA…DYPTKLKEFL (270 aa)). A divalent metal cation contacts are provided by E72, D74, and H87. The chain crosses the membrane as a helical span at residues 196 to 216 (IPILFSLQRVLLILGLFFTGL). Residues 217–314 (LPFVPIREQF…LKEFLNNMSA (98 aa)) are Extracellular-facing.

This sequence belongs to the glycerophosphoryl diester phosphodiesterase family.

The protein localises to the cytoplasm. The protein resides in the membrane. It localises to the perinuclear region. It is found in the endoplasmic reticulum. The enzyme catalyses a 1-O-alkyl-sn-glycero-3-phosphocholine + H2O = a 1-O-alkyl-sn-glycero-3-phosphate + choline + H(+). It catalyses the reaction 1-hexadecanoyl-sn-glycero-3-phosphocholine + H2O = 1-hexadecanoyl-sn-glycero-3-phosphate + choline + H(+). The catalysed reaction is 1-hexadecanoyl-sn-glycero-3-phosphoethanolamine + H2O = 1-hexadecanoyl-sn-glycero-3-phosphate + ethanolamine + H(+). It carries out the reaction N-hexadecanoyl-sn-glycero-3-phosphoethanolamine + H2O = N-hexadecanoylethanolamine + sn-glycerol 3-phosphate + H(+). The enzyme catalyses N-(5Z,8Z,11Z,14Z-eicosatetraenoyl)-1-(9Z-octadecenoyl)-sn-glycero-3-phosphoethanolamine + H2O = N-(5Z,8Z,11Z,14Z-eicosatetraenoyl)-ethanolamine + 1-(9Z-octadecenoyl)-sn-glycero-3-phosphate + H(+). It catalyses the reaction N,1-di-(9Z-octadecenoyl)-sn-glycero-3-phosphoethanolamine + H2O = N-(9Z-octadecenoyl) ethanolamine + 1-(9Z-octadecenoyl)-sn-glycero-3-phosphate + H(+). The catalysed reaction is N-hexadecanoyl-1-(9Z-octadecenoyl)-sn-glycero-3-phosphoethanolamine + H2O = N-hexadecanoylethanolamine + 1-(9Z-octadecenoyl)-sn-glycero-3-phosphate + H(+). It carries out the reaction 1-O-hexadecyl-sn-glycero-3-phosphocholine + H2O = 1-O-hexadecyl-sn-glycero-3-phosphate + choline + H(+). The enzyme catalyses 1-(9Z-octadecenoyl)-sn-glycero-3-phosphocholine + H2O = 1-(9Z-octadecenoyl)-sn-glycero-3-phosphate + choline + H(+). It catalyses the reaction N,1-dihexadecanoyl-sn-glycero-3-phosphoethanolamine + H2O = N-hexadecanoylethanolamine + 1-hexadecanoyl-sn-glycero-3-phosphate + H(+). The catalysed reaction is 1-O-(1Z-octadecenyl)-sn-glycero-3-phospho-(N-5Z,8Z,11Z,14Z-eicosatetraenoyl)-ethanolamine + H2O = 1-O-(1Z-octadecenyl)-sn-glycero-3-phosphate + N-(5Z,8Z,11Z,14Z-eicosatetraenoyl)-ethanolamine + H(+). It carries out the reaction 1-O-(1Z-octadecenyl)-sn-glycero-3-phospho-(N-9Z-octadecenoyl)-ethanolamine + H2O = 1-O-(1Z-octadecenyl)-sn-glycero-3-phosphate + N-(9Z-octadecenoyl) ethanolamine + H(+). The enzyme catalyses 1-O-(1Z-octadecenyl)-sn-glycero-3-phospho-N-hexadecanoyl-ethanolamine + H2O = 1-O-(1Z-octadecenyl)-sn-glycero-3-phosphate + N-hexadecanoylethanolamine + H(+). Lysophospholipase D activity is increased by magnesium and manganese and inhibited by calcium in a concentration dependent manner. Loss of lysophospholipase D activity by addition of EDTA. In terms of biological role, hydrolyzes lysoglycerophospholipids to produce lysophosphatidic acid (LPA) and the corresponding amines. Shows a preference for 1-O-alkyl-sn-glycero-3-phosphocholine (lyso-PAF), lysophosphatidylethanolamine (lyso-PE) and lysophosphatidylcholine (lyso-PC). May be involved in bioactive N-acylethanolamine biosynthesis from both N-acyl-lysoplasmenylethanolamin (N-acyl-lysoPlsEt) and N-acyl-lysophosphatidylethanolamin (N-acyl-lysoPE). In addition, hydrolyzes glycerophospho-N-acylethanolamine to N-acylethanolamine. Does not display glycerophosphodiester phosphodiesterase activity, since it cannot hydrolyze either glycerophosphoinositol or glycerophosphocholine. This chain is Lysophospholipase D GDPD1, found in Rattus norvegicus (Rat).